The sequence spans 712 residues: Ribosomal RNA large subunit methyltransferase K/L (712 aa).

The THUMP domain maps to 46–157; it reads GAYQALLHSR…RENMVVSLDL (112 aa).

The protein belongs to the methyltransferase superfamily. RlmKL family.

Its subcellular location is the cytoplasm. The catalysed reaction is guanosine(2445) in 23S rRNA + S-adenosyl-L-methionine = N(2)-methylguanosine(2445) in 23S rRNA + S-adenosyl-L-homocysteine + H(+). It carries out the reaction guanosine(2069) in 23S rRNA + S-adenosyl-L-methionine = N(2)-methylguanosine(2069) in 23S rRNA + S-adenosyl-L-homocysteine + H(+). Specifically methylates the guanine in position 2445 (m2G2445) and the guanine in position 2069 (m7G2069) of 23S rRNA. This Actinobacillus pleuropneumoniae serotype 3 (strain JL03) protein is Ribosomal RNA large subunit methyltransferase K/L.